Here is a 690-residue protein sequence, read N- to C-terminus: Eukaryotic translation initiation factor 3 subunit B (690 aa).

Over residues 1–11 (MAKKKSEDHSG) the composition is skewed to basic and acidic residues. The disordered stretch occupies residues 1–33 (MAKKKSEDHSGADANDSDYNEEPNFDDPPNFVD). Positions 15 to 25 (NDSDYNEEPNF) are enriched in acidic residues. The 85-residue stretch at 57-141 (SVVVVDNMPK…YTFAVNLFTD (85 aa)) folds into the RRM domain. WD repeat units lie at residues 207–246 (TRER…KIQK), 292–331 (GDGM…LLDL), 334–369 (IKIP…TLMK), 442–484 (EIRE…KPSL), and 530–575 (PDHF…IKRT). Residues 613-646 (EQKDRLRLTRASKELLEKRAQLRETFMEYRNKRI) adopt a coiled-coil conformation.

This sequence belongs to the eIF-3 subunit B family. Component of the eukaryotic translation initiation factor 3 (eIF-3) complex. The eIF-3 complex interacts with pix. Interacts with mxt.

It is found in the cytoplasm. Functionally, RNA-binding component of the eukaryotic translation initiation factor 3 (eIF-3) complex, which is involved in protein synthesis of a specialized repertoire of mRNAs and, together with other initiation factors, stimulates binding of mRNA and methionyl-tRNAi to the 40S ribosome. The eIF-3 complex specifically targets and initiates translation of a subset of mRNAs involved in cell proliferation. The sequence is that of Eukaryotic translation initiation factor 3 subunit B from Drosophila grimshawi (Hawaiian fruit fly).